Consider the following 400-residue polypeptide: Imidazolonepropionase (400 aa).

The Fe(3+) site is built by His-70 and His-72. Zn(2+) contacts are provided by His-70 and His-72. 4-imidazolone-5-propanoate contacts are provided by Arg-79, Tyr-142, and His-175. Tyr-142 lines the N-formimidoyl-L-glutamate pocket. His-239 is a binding site for Fe(3+). Residue His-239 participates in Zn(2+) binding. Gln-242 provides a ligand contact to 4-imidazolone-5-propanoate. Asp-314 is a Fe(3+) binding site. Asp-314 is a binding site for Zn(2+). The N-formimidoyl-L-glutamate site is built by Asn-316 and Gly-318. 4-imidazolone-5-propanoate is bound at residue Thr-319.

Belongs to the metallo-dependent hydrolases superfamily. HutI family. It depends on Zn(2+) as a cofactor. Fe(3+) serves as cofactor.

Its subcellular location is the cytoplasm. The enzyme catalyses 4-imidazolone-5-propanoate + H2O = N-formimidoyl-L-glutamate. It functions in the pathway amino-acid degradation; L-histidine degradation into L-glutamate; N-formimidoyl-L-glutamate from L-histidine: step 3/3. Catalyzes the hydrolytic cleavage of the carbon-nitrogen bond in imidazolone-5-propanoate to yield N-formimidoyl-L-glutamate. It is the third step in the universal histidine degradation pathway. In Methylobacterium sp. (strain 4-46), this protein is Imidazolonepropionase.